The primary structure comprises 125 residues: Small ribosomal subunit protein uS12 (125 aa).

Asp-89 is modified (3-methylthioaspartic acid). Residues 100–125 (GSLDTQGVQNRKQARSKYGAKRPKKA) form a disordered region. Basic residues predominate over residues 111–125 (KQARSKYGAKRPKKA).

This sequence belongs to the universal ribosomal protein uS12 family. As to quaternary structure, part of the 30S ribosomal subunit. Contacts proteins S8 and S17. May interact with IF1 in the 30S initiation complex.

Functionally, with S4 and S5 plays an important role in translational accuracy. Interacts with and stabilizes bases of the 16S rRNA that are involved in tRNA selection in the A site and with the mRNA backbone. Located at the interface of the 30S and 50S subunits, it traverses the body of the 30S subunit contacting proteins on the other side and probably holding the rRNA structure together. The combined cluster of proteins S8, S12 and S17 appears to hold together the shoulder and platform of the 30S subunit. In Thioalkalivibrio sulfidiphilus (strain HL-EbGR7), this protein is Small ribosomal subunit protein uS12.